Consider the following 304-residue polypeptide: UDP-N-acetylenolpyruvoylglucosamine reductase (304 aa).

An FAD-binding PCMH-type domain is found at 32–198; sequence RVGGPADILV…LSAELELQEG (167 aa). R177 is a catalytic residue. S227 serves as the catalytic Proton donor. E297 is a catalytic residue.

It belongs to the MurB family. FAD is required as a cofactor.

The protein localises to the cytoplasm. The catalysed reaction is UDP-N-acetyl-alpha-D-muramate + NADP(+) = UDP-N-acetyl-3-O-(1-carboxyvinyl)-alpha-D-glucosamine + NADPH + H(+). It participates in cell wall biogenesis; peptidoglycan biosynthesis. Functionally, cell wall formation. The polypeptide is UDP-N-acetylenolpyruvoylglucosamine reductase (Clostridioides difficile (strain 630) (Peptoclostridium difficile)).